The sequence spans 412 residues: Subtilisin-like protease 6 (412 aa).

An N-terminal signal peptide occupies residues 1–20; sequence MGFITKAIPIVLAALSTVNG. Residues 21 to 126 constitute a propeptide that is removed on maturation; it reads ARILEAGPHA…VVRTTTNGTN (106 aa). The 85-residue stretch at 36-120 folds into the Inhibitor I9 domain; it reads KYIVVMKREV…FIEPDFVVRT (85 aa). N-linked (GlcNAc...) asparagine glycosylation is found at Asn-123 and Asn-126. The Peptidase S8 domain maps to 135 to 412; the sequence is SWGLARVGSK…GKLIYNGSGK (278 aa). Catalysis depends on charge relay system residues Asp-167 and His-198. Asn-252 and Asn-264 each carry an N-linked (GlcNAc...) asparagine glycan. Ser-358 serves as the catalytic Charge relay system. N-linked (GlcNAc...) asparagine glycosylation occurs at Asn-408.

It belongs to the peptidase S8 family.

It is found in the secreted. Secreted subtilisin-like serine protease with keratinolytic activity that contributes to pathogenicity. The polypeptide is Subtilisin-like protease 6 (SUB6) (Trichophyton rubrum (Athlete's foot fungus)).